The primary structure comprises 156 residues: Ribosomal RNA large subunit methyltransferase H (156 aa).

S-adenosyl-L-methionine contacts are provided by residues Gly104 and 123-128; that span reads LSAMTL.

It belongs to the RNA methyltransferase RlmH family. In terms of assembly, homodimer.

Its subcellular location is the cytoplasm. The enzyme catalyses pseudouridine(1915) in 23S rRNA + S-adenosyl-L-methionine = N(3)-methylpseudouridine(1915) in 23S rRNA + S-adenosyl-L-homocysteine + H(+). Its function is as follows. Specifically methylates the pseudouridine at position 1915 (m3Psi1915) in 23S rRNA. The sequence is that of Ribosomal RNA large subunit methyltransferase H from Chromobacterium violaceum (strain ATCC 12472 / DSM 30191 / JCM 1249 / CCUG 213 / NBRC 12614 / NCIMB 9131 / NCTC 9757 / MK).